Consider the following 302-residue polypeptide: GTPase Era (302 aa).

An Era-type G domain is found at Tyr-9–Glu-177. The G1 stretch occupies residues Gly-17–Ser-24. Gly-17–Ser-24 contacts GTP. A G2 region spans residues Gln-43 to His-47. The G3 stretch occupies residues Asp-64 to Gly-67. Residues Asp-64–Leu-68 and Asn-126–Asp-129 each bind GTP. The interval Asn-126–Asp-129 is G4. Residues Ile-156–Ala-158 are G5. The 78-residue stretch at Thr-208 to Ser-285 folds into the KH type-2 domain.

This sequence belongs to the TRAFAC class TrmE-Era-EngA-EngB-Septin-like GTPase superfamily. Era GTPase family. Monomer.

The protein resides in the cytoplasm. The protein localises to the cell inner membrane. In terms of biological role, an essential GTPase that binds both GDP and GTP, with rapid nucleotide exchange. Plays a role in 16S rRNA processing and 30S ribosomal subunit biogenesis and possibly also in cell cycle regulation and energy metabolism. This Haemophilus influenzae (strain PittGG) protein is GTPase Era.